The following is a 144-amino-acid chain: Cathelicidin-4 (144 aa).

The first 29 residues, Met1–Ala29, serve as a signal peptide directing secretion. A propeptide spanning residues Gln30 to Val130 is cleaved from the precursor. Intrachain disulfides connect Cys85/Cys96 and Cys107/Cys124. Arginine amide is present on Arg143.

It belongs to the cathelicidin family. Elastase might be responsible for its maturation. In terms of tissue distribution, large granules of neutrophils.

The protein localises to the secreted. Potent microbicidal activity; active against S.aureus and E.coli. The protein is Cathelicidin-4 (CATHL4) of Bos taurus (Bovine).